Here is a 1045-residue protein sequence, read N- to C-terminus: Protein madd-4 (1045 aa).

The signal sequence occupies residues Met1–Ala23. 5 consecutive TSP type-1 domains span residues Leu24–Glu71, Arg236–Ser292, Ser294–Pro510, Phe512–Ala572, and Thr576–Ser635. 3 disulfide bridges follow: Cys35-Cys65, Cys39-Cys70, and Cys50-Cys55. 2 N-linked (GlcNAc...) asparagine glycosylation sites follow: Asn268 and Asn280. Residues Pro637 to Thr732 enclose the Ig-like C2-type domain. A disulfide bridge links Cys674 with Cys722. Asn730 and Asn781 each carry an N-linked (GlcNAc...) asparagine glycan. In terms of domain architecture, TSP type-1 6 spans Arg811–Pro873. N-linked (GlcNAc...) asparagine glycans are attached at residues Asn899 and Asn906. In terms of domain architecture, TSP type-1 7 spans Cys932–Pro990. Residues Arg1004–Glu1041 form the PLAC domain.

As to quaternary structure, interacts with eva-1 (via the SUEL-type lectin domain). Interacts with unc-5. Interacts with unc-40; the interaction is required for the localization of unc-40 to postsynaptic domains. Isoform a forms homodimers and heterodimers with isoform b. Isoform b forms homodimers and heterodimers with isoform a. Isoform b interacts with nlg-1 (via extracellular domain); the interaction is required for nlg-1 localization to postsynaptic domains. Isoform b interacts (via the Ig-like C2-type domain) with nrx-1 (via C-terminus). In terms of tissue distribution, isoform a: Expressed in the commissural GABAergic and cholinergic motor neurons in the first larval stage but only in the cholinergic motor neurons in later larval stages and in adult animals. At the L1 larval stage, mainly localized at the nerve ring and at the dorsal cord. Isoform b: Expressed in the commissural GABAergic and cholinergic motor neurons whose cell bodies reside in the ventral nerve cord and which extend axons into the ventral and dorsal nerve cord. Also expressed in the head neurons RIA, RIC, lateral IL1s, lateral IL2s, OLLs, RMEs and SABs, all of which extend axons into the nerve ring. Expressed in the embryogenic blast cells and the corresponding terminally differentiated ventral cord motor neurons and head neurons.

Its subcellular location is the cell projection. It localises to the axon. It is found in the secreted. The protein resides in the synapse. The protein localises to the extracellular space. Its subcellular location is the extracellular matrix. Functionally, component of an extracellular matrix cue that is involved in the guidance of dorsoventral midline migrations and in the specification of postsynaptic domains at neuromuscular junctions (NMJs). Acts as a ligand for the netrin receptor unc-40 and the neuroligin receptor nlg-1. Secreted by the dorsal and ventral nerve cords to attract sensory axons and muscle membrane extensions called muscle arms. In parallel with unc-6 and slt-1, involved in the netrin receptor unc-40 dependent guidance of the AVM and PVM mechanosensory axons along the dorsal-ventral axis. The unc-40 coreceptor eva-1 is enhancing the responsiveness of unc-40 to the madd-4 guidance cue to attract the muscle arm extensions and AVM mechanosensory axons towards the dorsoventral midline. Acts as a synaptic organizer and is required for the specification of inhibitory GABAergic and excitatory cholinergic identities of postsynaptic domains at neuromuscular junctions (NMJs). Required for the recruitment of unc-40 to both cholinergic and GABAergic NMJs. Promotes the clustering of ACh receptors and GABA(A) receptors at postsynaptic sites during synaptogenesis. The binding to the presynaptic adhesion protein nrx-1 and to the neuroligin nlg-1 at postsynaptic sites promotes clustering of GABAergic receptors at postsynaptic NMJs, thereby contributing to normal GABAergic synaptic transmission. In terms of biological role, isoform a and isoform c: Promotes the clustering of acetylcholine receptors (AChR) at excitatory cholinergic synapses of NMJs via the netrin receptor unc-40. Its function is as follows. Acts as a guidance cue in the attraction of muscle membrane extensions (muscle arms) to the dorsal cord and in cooperation with unc-6 to the ventral cord via the netrin receptor unc-40 and via the unc-40 coreceptor eva-1. Together with nrx-1, clusters netrin receptor unc-40 and neuroligin nlg-1 at postsynaptic sites of GABAergic NMJs, thereby promoting the recruitment of GABA(A) receptors at GABAergic synapses. Prevents the recruitment of GABAergic receptors to cholinergic synapses. This Caenorhabditis elegans protein is Protein madd-4.